The primary structure comprises 451 residues: Deoxyguanosinetriphosphate triphosphohydrolase-like protein (451 aa).

Residues 61-274 (RLTHSLEVAQ…MELADDIAYG (214 aa)) form the HD domain.

It belongs to the dGTPase family. Type 2 subfamily.

The sequence is that of Deoxyguanosinetriphosphate triphosphohydrolase-like protein from Actinobacillus succinogenes (strain ATCC 55618 / DSM 22257 / CCUG 43843 / 130Z).